The following is a 393-amino-acid chain: Telomeric repeat-binding factor 2-interacting protein 1 (393 aa).

N-acetylalanine is present on Ala2. Phosphoserine is present on residues Ser36 and Ser43. Residues 78–101 (FISTQYILDCVDRNEKLDLEAYRL) form the BRCT domain. The interval 104–132 (TEQASDPKPGASTEGSTEPEPQPLTGRIA) is disordered. Lys111 is covalently cross-linked (Glycyl lysine isopeptide (Lys-Gly) (interchain with G-Cter in SUMO2)). Residues 125–185 (QPLTGRIAYT…SLKDRYLKHL (61 aa)) form the Myb-like domain. Ser151 and Ser153 each carry phosphoserine. A Glycyl lysine isopeptide (Lys-Gly) (interchain with G-Cter in SUMO2) cross-link involves residue Lys191. Residues 193–304 (LLGNAPVSPS…EEEPKVSTQE (112 aa)) are disordered. A phosphoserine mark is found at Ser200 and Ser203. Glycyl lysine isopeptide (Lys-Gly) (interchain with G-Cter in SUMO2) cross-links involve residues Lys205, Lys209, and Lys237. A compositionally biased stretch (basic and acidic residues) spans 223–252 (QNKRAPDLPEEECVKGEIKENGEADNKLFE). Over residues 282 to 297 (TPEEDSETQPDEEEEE) the composition is skewed to acidic residues. Lys366 is covalently cross-linked (Glycyl lysine isopeptide (Lys-Gly) (interchain with G-Cter in SUMO2)). A Nuclear localization signal motif is present at residues 377-393 (KKFGAQNVARRIEFRKK).

This sequence belongs to the RAP1 family. In terms of assembly, homodimer. Component of the shelterin complex (telosome) composed of TERF1, TERF2, TINF2, TERF2IP ACD and POT1. Binds to TERF2 (but not TERF1) with its C-terminus. Interacts with SLX4/BTBD12. Interacts with TERF2; the interaction is direct. Does not interact with TERF1. Associates with the I-kappa-B-kinase (IKK) core complex, composed of CHUK, IKBKB and IKBKG.

The protein localises to the nucleus. The protein resides in the cytoplasm. It localises to the chromosome. It is found in the telomere. Its function is as follows. Acts both as a regulator of telomere function and as a transcription regulator. Involved in the regulation of telomere length and protection as a component of the shelterin complex (telosome). In contrast to other components of the shelterin complex, it is dispensible for telomere capping and does not participate in the protection of telomeres against non-homologous end-joining (NHEJ)-mediated repair. Instead, it is required to negatively regulate telomere recombination and is essential for repressing homology-directed repair (HDR), which can affect telomere length. Does not bind DNA directly: recruited to telomeric double-stranded 5'-TTAGGG-3' repeats via its interaction with TERF2. Independently of its function in telomeres, also acts as a transcription regulator: recruited to extratelomeric 5'-TTAGGG-3' sites via its association with TERF2 or other factors, and regulates gene expression. When cytoplasmic, associates with the I-kappa-B-kinase (IKK) complex and acts as a regulator of the NF-kappa-B signaling by promoting IKK-mediated phosphorylation of RELA/p65, leading to activate expression of NF-kappa-B target genes. The protein is Telomeric repeat-binding factor 2-interacting protein 1 (Terf2ip) of Mus musculus (Mouse).